The sequence spans 204 residues: MNSQPLRVGIGGPVGSGKTALTLALCRALRERYNIAVVTNDIYTQEDAQFLVRNEALEPERIIGVETGGCPHTAIREDASINLEAVEQLNRRFPGLDLIIVESGGDNLSATFSPELSDLTLYVIDVSAGDKLPRKGGPGICKSDLLVINKVDLAPMVGASLEVMERDTLKMRGDKPFVFSNQKIGQGLDEIIAFIERQGMLTAA.

12–19 (GPVGSGKT) is a binding site for GTP.

Belongs to the SIMIBI class G3E GTPase family. UreG subfamily. Homodimer. UreD, UreF and UreG form a complex that acts as a GTP-hydrolysis-dependent molecular chaperone, activating the urease apoprotein by helping to assemble the nickel containing metallocenter of UreC. The UreE protein probably delivers the nickel.

The protein resides in the cytoplasm. In terms of biological role, facilitates the functional incorporation of the urease nickel metallocenter. This process requires GTP hydrolysis, probably effectuated by UreG. In Ectopseudomonas mendocina (strain ymp) (Pseudomonas mendocina), this protein is Urease accessory protein UreG.